A 156-amino-acid chain; its full sequence is Transcriptional repressor NrdR (156 aa).

The segment at 3–34 (CPFCGNIDTQVKDSRPAEDHVSIRRRRFCPAC) is a zinc-finger region. An ATP-cone domain is found at 49 to 139 (LVVIKTSGKR…VYKNFQAADD (91 aa)).

Belongs to the NrdR family. Zn(2+) is required as a cofactor.

Its function is as follows. Negatively regulates transcription of bacterial ribonucleotide reductase nrd genes and operons by binding to NrdR-boxes. The polypeptide is Transcriptional repressor NrdR (Ruegeria pomeroyi (strain ATCC 700808 / DSM 15171 / DSS-3) (Silicibacter pomeroyi)).